Reading from the N-terminus, the 319-residue chain is MKLPLVVLVGPTAVGKTALSVAVAQAVGAEIISGDSMQVYRGMDIGTAKIRPEEMGGVPHHLIDIKDPDEEFSVAEFQARVDALIPQICARGRLPMLVGGTGLYVRAVVEKYTFTPMEADHELRARLRQEEERHGPGYLHARLREVDPASAARLHPNDLLRIVRALEVYEQTGVPISATQTAAFSEPRYDDLMIGLTMDRAQLYARIDERVDAMLAAGWLDEVRGLLVRYPPHVRAMQALGYRELVLYLRGLLTWEEAVALIKRNTRRFAKRQFTWFRKERRLTWLDLTGPEARNRATEEIVRLIREKWPCRERKGRIE.

10–17 (GPTAVGKT) contributes to the ATP binding site. 12–17 (TAVGKT) lines the substrate pocket. The interaction with substrate tRNA stretch occupies residues 35-38 (DSMQ).

Belongs to the IPP transferase family. Monomer. Requires Mg(2+) as cofactor.

The catalysed reaction is adenosine(37) in tRNA + dimethylallyl diphosphate = N(6)-dimethylallyladenosine(37) in tRNA + diphosphate. Catalyzes the transfer of a dimethylallyl group onto the adenine at position 37 in tRNAs that read codons beginning with uridine, leading to the formation of N6-(dimethylallyl)adenosine (i(6)A). In Symbiobacterium thermophilum (strain DSM 24528 / JCM 14929 / IAM 14863 / T), this protein is tRNA dimethylallyltransferase.